We begin with the raw amino-acid sequence, 421 residues long: Osmoprotective compounds-binding protein GgtB (421 aa).

Positions 1–18 are cleaved as a signal peptide; it reads MKFFKITTLIISLIVLTS. C19 carries N-palmitoyl cysteine lipidation. Residue C19 is the site of S-diacylglycerol cysteine attachment.

This sequence belongs to the bacterial solute-binding protein 1 family. As to quaternary structure, the complex is composed of two ATP-binding proteins (GgtA), two transmembrane proteins (GgtC and GgtD) and a solute-binding protein (GgtB).

The protein resides in the cell membrane. Part of the ABC transporter complex GgtABCD involved in the uptake of the osmoprotective compounds glucosylglycerol (GG), sucrose and trehalose. Binds glucosylglycerol and exhibits a somewhat lower affinity towards sucrose and a substantially lower affinity towards trehalose. This Synechocystis sp. (strain ATCC 27184 / PCC 6803 / Kazusa) protein is Osmoprotective compounds-binding protein GgtB.